The sequence spans 167 residues: NADH-quinone oxidoreductase subunit B (167 aa).

Residues C48, C49, C113, and C143 each coordinate [4Fe-4S] cluster.

Belongs to the complex I 20 kDa subunit family. In terms of assembly, NDH-1 is composed of 14 different subunits. Subunits NuoB, C, D, E, F, and G constitute the peripheral sector of the complex. [4Fe-4S] cluster is required as a cofactor.

The protein localises to the cell membrane. It carries out the reaction a quinone + NADH + 5 H(+)(in) = a quinol + NAD(+) + 4 H(+)(out). Functionally, NDH-1 shuttles electrons from NADH, via FMN and iron-sulfur (Fe-S) centers, to quinones in the respiratory chain. Couples the redox reaction to proton translocation (for every two electrons transferred, four hydrogen ions are translocated across the cytoplasmic membrane), and thus conserves the redox energy in a proton gradient. The sequence is that of NADH-quinone oxidoreductase subunit B from Wolbachia pipientis subsp. Culex pipiens (strain wPip).